A 101-amino-acid polypeptide reads, in one-letter code: Urease subunit beta (101 aa).

Belongs to the urease beta subunit family. As to quaternary structure, heterotrimer of UreA (gamma), UreB (beta) and UreC (alpha) subunits. Three heterotrimers associate to form the active enzyme.

The protein localises to the cytoplasm. It carries out the reaction urea + 2 H2O + H(+) = hydrogencarbonate + 2 NH4(+). Its pathway is nitrogen metabolism; urea degradation; CO(2) and NH(3) from urea (urease route): step 1/1. The sequence is that of Urease subunit beta from Azoarcus sp. (strain BH72).